The primary structure comprises 239 residues: Pyridoxine 5'-phosphate synthase (239 aa).

Asn7 is a binding site for 3-amino-2-oxopropyl phosphate. Residue 9-10 (DH) participates in 1-deoxy-D-xylulose 5-phosphate binding. Arg18 serves as a coordination point for 3-amino-2-oxopropyl phosphate. The active-site Proton acceptor is His43. Residues Arg45 and His50 each coordinate 1-deoxy-D-xylulose 5-phosphate. The active-site Proton acceptor is Glu70. 1-deoxy-D-xylulose 5-phosphate is bound at residue Thr100. His191 serves as the catalytic Proton donor. 3-amino-2-oxopropyl phosphate-binding positions include Gly192 and 213–214 (GH).

Belongs to the PNP synthase family. Homooctamer; tetramer of dimers.

The protein localises to the cytoplasm. The enzyme catalyses 3-amino-2-oxopropyl phosphate + 1-deoxy-D-xylulose 5-phosphate = pyridoxine 5'-phosphate + phosphate + 2 H2O + H(+). The protein operates within cofactor biosynthesis; pyridoxine 5'-phosphate biosynthesis; pyridoxine 5'-phosphate from D-erythrose 4-phosphate: step 5/5. Functionally, catalyzes the complicated ring closure reaction between the two acyclic compounds 1-deoxy-D-xylulose-5-phosphate (DXP) and 3-amino-2-oxopropyl phosphate (1-amino-acetone-3-phosphate or AAP) to form pyridoxine 5'-phosphate (PNP) and inorganic phosphate. The protein is Pyridoxine 5'-phosphate synthase of Nostoc sp. (strain PCC 7120 / SAG 25.82 / UTEX 2576).